Here is a 708-residue protein sequence, read N- to C-terminus: Leukotoxin translocation ATP-binding protein LktB (708 aa).

The region spanning Met-1–Val-126 is the Peptidase C39 domain. The 283-residue stretch at Phe-155 to Gln-437 folds into the ABC transmembrane type-1 domain. 5 helical membrane passes run Leu-159 to Val-179, Leu-192 to Leu-212, Ala-270 to Tyr-290, Leu-296 to Leu-316, and Val-389 to Gly-409. The region spanning Ile-469 to Gln-704 is the ABC transporter domain. Gly-503–Ser-510 contributes to the ATP binding site.

The protein belongs to the ABC transporter superfamily. Protein-1 exporter (TC 3.A.1.109) family. In terms of assembly, homodimer.

Its subcellular location is the cell inner membrane. It catalyses the reaction ATP + H2O + proteinSide 1 = ADP + phosphate + proteinSide 2.. Functionally, part of the ABC transporter complex LktBD involved in leukotoxin export. Transmembrane domains (TMD) form a pore in the inner membrane and the ATP-binding domain (NBD) is responsible for energy generation. The polypeptide is Leukotoxin translocation ATP-binding protein LktB (lktB) (Mannheimia haemolytica (Pasteurella haemolytica)).